Here is a 114-residue protein sequence, read N- to C-terminus: Large ribosomal subunit protein bL20 (114 aa).

The protein belongs to the bacterial ribosomal protein bL20 family.

Its function is as follows. Binds directly to 23S ribosomal RNA and is necessary for the in vitro assembly process of the 50S ribosomal subunit. It is not involved in the protein synthesizing functions of that subunit. The sequence is that of Large ribosomal subunit protein bL20 from Amoebophilus asiaticus (strain 5a2).